The following is a 183-amino-acid chain: Nucleoplasmin-like protein NO29 (183 aa).

Positions serine 126–isoleucine 166 are enriched in acidic residues. The tract at residues serine 126–phenylalanine 183 is disordered.

It belongs to the nucleoplasmin family.

It localises to the nucleus. Its subcellular location is the nucleolus. In Xenopus laevis (African clawed frog), this protein is Nucleoplasmin-like protein NO29.